The following is a 567-amino-acid chain: Frizzled-7 (567 aa).

Positions 1–31 are cleaved as a signal peptide; the sequence is MRPAAGEAGAGLRWLGLAALLAALLGTPCAA. At 32 to 250 the chain is on the extracellular side; it reads AHHEDKAISV…EAEVRFARLW (219 aa). The 120-residue stretch at 42 to 161 folds into the FZ domain; that stretch reads PDHGFCQPIS…HGAGEICVGQ (120 aa). 5 disulfides stabilise this stretch: Cys47-Cys108, Cys55-Cys101, Cys92-Cys129, Cys118-Cys158, and Cys122-Cys146. Residue Asn61 is glycosylated (N-linked (GlcNAc...) asparagine). The N-linked (GlcNAc...) asparagine glycan is linked to Asn162. A helical membrane pass occupies residues 251–271; that stretch reads VGVWSVLCCASTLFTVLTYLV. Over 272–282 the chain is Cytoplasmic; that stretch reads DMRRFSYPERP. Residues 283 to 303 traverse the membrane as a helical segment; that stretch reads IIFLSGCYFMVAVAYAAGFLL. Over 304-330 the chain is Extracellular; the sequence is EERVVCLERFSEDGYRTVAQGTKKEGC. The chain crosses the membrane as a helical span at residues 331-351; it reads TILFMILYFFGMASSIWWVIL. The Cytoplasmic portion of the chain corresponds to 352-373; sequence SLTWFLAAGMKWGHEAIEANSQ. The chain crosses the membrane as a helical span at residues 374–394; it reads YFHLAAWAVPAVKTITILAMG. The Extracellular segment spans residues 395–417; it reads QVDGDVLSGVCYVGIYSVDSLRG. Residues 418–438 traverse the membrane as a helical segment; the sequence is FVLAPLFVYLFIGTSFLLAGF. The Cytoplasmic portion of the chain corresponds to 439–464; the sequence is VSLFRIRTIMKHDGTKTEKLEKLMVR. A helical membrane pass occupies residues 465–485; that stretch reads IGVFSVLYTVPATIVVACYFY. Residues 486–521 lie on the Extracellular side of the membrane; sequence EQAFRSTWEKTWLLQTCKTYAVPCPSHFAPMSPDFT. A helical transmembrane segment spans residues 522–542; sequence VFMIKYLMTMIVGITTGFWIW. Residues 543–567 lie on the Cytoplasmic side of the membrane; the sequence is SGKTLQSWRRFYHRLSTGSKGETAV. A Lys-Thr-X-X-X-Trp motif, mediates interaction with the PDZ domain of Dvl family members motif is present at residues 545-550; it reads KTLQSW. Positions 565-567 match the PDZ-binding motif; the sequence is TAV.

Belongs to the G-protein coupled receptor Fz/Smo family. Expressed broadly in cranial ectoderm. Also expressed in the developing somites and in other cranial placodes, including the olfactory, lens, otic placodes (lateral half of the vesicle) and epibranchial placodes. Low level of expression in all the mesoderm derivatives in the limb buds.

Its subcellular location is the cell membrane. The protein localises to the endosome membrane. Functionally, receptor for Wnt proteins. Most of frizzled receptors are coupled to the beta-catenin canonical signaling pathway, which leads to the activation of disheveled proteins, inhibition of GSK-3 kinase, nuclear accumulation of beta-catenin and activation of Wnt target genes. A second signaling pathway involving PKC and calcium fluxes has been seen for some family members, but it is not yet clear if it represents a distinct pathway or if it can be integrated in the canonical pathway, as PKC seems to be required for Wnt-mediated inactivation of GSK-3 kinase. Both pathways seem to involve interactions with G-proteins. May be involved in transduction and intercellular transmission of polarity information during tissue morphogenesis and/or in differentiated tissues. This is Frizzled-7 (FZD7) from Gallus gallus (Chicken).